The following is a 345-amino-acid chain: Adenine deaminase (345 aa).

Residues H24, H26, and H204 each contribute to the Zn(2+) site. The Proton donor role is filled by E207. Residue D285 coordinates Zn(2+). D286 serves as a coordination point for substrate.

This sequence belongs to the metallo-dependent hydrolases superfamily. Adenosine and AMP deaminases family. Adenine deaminase type 2 subfamily. Zn(2+) serves as cofactor.

The enzyme catalyses adenine + H2O + H(+) = hypoxanthine + NH4(+). Functionally, catalyzes the hydrolytic deamination of adenine to hypoxanthine. Plays an important role in the purine salvage pathway and in nitrogen catabolism. This chain is Adenine deaminase, found in Albidiferax ferrireducens (strain ATCC BAA-621 / DSM 15236 / T118) (Rhodoferax ferrireducens).